The sequence spans 400 residues: Acetate kinase (400 aa).

Residue Asn9 participates in Mg(2+) binding. Residue Lys16 participates in ATP binding. Residue Arg90 coordinates substrate. Asp147 acts as the Proton donor/acceptor in catalysis. Residues 207–211 (HIGNG), 282–284 (DLR), and 330–334 (GIGEN) contribute to the ATP site. Glu385 lines the Mg(2+) pocket.

This sequence belongs to the acetokinase family. Homodimer. Requires Mg(2+) as cofactor. Mn(2+) serves as cofactor.

It is found in the cytoplasm. It catalyses the reaction acetate + ATP = acetyl phosphate + ADP. It participates in metabolic intermediate biosynthesis; acetyl-CoA biosynthesis; acetyl-CoA from acetate: step 1/2. Its function is as follows. Catalyzes the formation of acetyl phosphate from acetate and ATP. Can also catalyze the reverse reaction. The protein is Acetate kinase of Staphylococcus aureus (strain JH1).